A 269-amino-acid polypeptide reads, in one-letter code: UPF0162 protein BUsg_167 (269 aa).

The protein belongs to the UPF0162 family.

This Buchnera aphidicola subsp. Schizaphis graminum (strain Sg) protein is UPF0162 protein BUsg_167.